The sequence spans 389 residues: COP9 signalosome complex subunit 11 (389 aa).

Residues 143–312 form the PCI domain; it reads QLIIDIPNLV…ILYQKFDPQM (170 aa).

In terms of assembly, component of a COP9 signalosome-like (CSN) complex.

It localises to the cytoplasm. Its subcellular location is the nucleus. Component of the COP9 signalosome (CSN) complex that acts as an regulator of the ubiquitin (Ubl) conjugation pathway by mediating the deneddylation of the cullin subunit of SCF-type E3 ubiquitin-protein ligase complexes The CSN complex is involved in the regulation of the mating pheromone response. PCI8 may also be involved in transcriptional and translational control. This is COP9 signalosome complex subunit 11 (PCI8) from Kluyveromyces lactis (strain ATCC 8585 / CBS 2359 / DSM 70799 / NBRC 1267 / NRRL Y-1140 / WM37) (Yeast).